We begin with the raw amino-acid sequence, 147 residues long: Myoglobin (147 aa).

In terms of domain architecture, Globin spans Ala2–Lys141. His60 serves as a coordination point for nitrite. Residue His60 coordinates O2. His89 contributes to the heme b binding site.

It belongs to the globin family. As to quaternary structure, monomeric.

Its subcellular location is the cytoplasm. It localises to the sarcoplasm. It catalyses the reaction Fe(III)-heme b-[protein] + nitric oxide + H2O = Fe(II)-heme b-[protein] + nitrite + 2 H(+). It carries out the reaction H2O2 + AH2 = A + 2 H2O. Functionally, monomeric heme protein which primary function is to store oxygen and facilitate its diffusion within muscle tissues. Reversibly binds oxygen through a pentacoordinated heme iron and enables its timely and efficient release as needed during periods of heightened demand. Depending on the oxidative conditions of tissues and cells, and in addition to its ability to bind oxygen, it also has a nitrite reductase activity whereby it regulates the production of bioactive nitric oxide. Under stress conditions, like hypoxia and anoxia, it also protects cells against reactive oxygen species thanks to its pseudoperoxidase activity. This chain is Myoglobin (mb), found in Notothenia neglecta (Yellowbelly rockcod).